Consider the following 112-residue polypeptide: Protein 4.2 (112 aa).

Residues 64–93 form a disordered region; the sequence is KPDGLNHQVTQGKKSHTQSQQTGPTTLTSD. Polar residues predominate over residues 70–92; that stretch reads HQVTQGKKSHTQSQQTGPTTLTS.

The sequence is that of Protein 4.2 from Escherichia phage T7 (Bacteriophage T7).